We begin with the raw amino-acid sequence, 329 residues long: DNA-directed RNA polymerase subunit alpha (329 aa).

The interval 1 to 232 is alpha N-terminal domain (alpha-NTD); that stretch reads MQEMLEQLLT…YQLIAFVDLK (232 aa). Residues 246–329 form an alpha C-terminal domain (alpha-CTD) region; sequence FDPIFLQPVD…PSSLVSKESA (84 aa).

This sequence belongs to the RNA polymerase alpha chain family. Homodimer. The RNAP catalytic core consists of 2 alpha, 1 beta, 1 beta' and 1 omega subunit. When a sigma factor is associated with the core the holoenzyme is formed, which can initiate transcription.

It catalyses the reaction RNA(n) + a ribonucleoside 5'-triphosphate = RNA(n+1) + diphosphate. Functionally, DNA-dependent RNA polymerase catalyzes the transcription of DNA into RNA using the four ribonucleoside triphosphates as substrates. The protein is DNA-directed RNA polymerase subunit alpha of Hydrogenovibrio crunogenus (strain DSM 25203 / XCL-2) (Thiomicrospira crunogena).